Reading from the N-terminus, the 773-residue chain is Elongin-A (773 aa).

Residues 4–79 form the TFIIS N-terminal domain; it reads ESALQVVEKL…AQWKKLVPVE (76 aa). The segment covering 79-93 has biased composition (basic and acidic residues); the sequence is ERNNEAEDQDFEKSN. The segment at 79–480 is disordered; sequence ERNNEAEDQD…PRKVPTDVLP (402 aa). The segment covering 112-124 has biased composition (polar residues); that stretch reads YQESWQASGSQPY. Over residues 136 to 156 the composition is skewed to basic and acidic residues; sequence LPELERPHKVAHGHERRDERK. Residues 162-174 show a composition bias toward low complexity; the sequence is SPPYSSDPESSDY. S195 is subject to Phosphoserine. Over residues 239 to 248 the composition is skewed to basic residues; sequence KPHKSSHKEK. Basic and acidic residues-rich tracts occupy residues 249–265 and 271–304; these read RPVD…MGRE and SSKE…EGNS. S310 carries the post-translational modification Phosphoserine. Composition is skewed to basic and acidic residues over residues 317 to 339 and 368 to 380; these read SDNH…KNKQ and QEGK…DRKS. A phosphoserine mark is found at S380 and S383. K430 carries the post-translational modification N6-acetyllysine. S515 is modified (phosphoserine). The segment at 521 to 680 is activation domain; sequence EAGFTGRRMN…PPRDVRRRQE (160 aa). Residues 549–558 form a BC-box region; it reads TLHQQCIRVL. Positions 565-609 constitute an F-box domain; that stretch reads IFEVGGVPYSVLEPVLERCTPDQLYRIEECNHVLIEETDQLWKVH. A disordered region spans residues 671 to 747; sequence PPRDVRRRQE…VASSSVSYDP (77 aa). Residues 704–718 show a composition bias toward low complexity; that stretch reads SSHVPASNSSSSFHS. Polar residues predominate over residues 728 to 744; it reads PSTSSAHLAPVASSSVS.

Heterotrimer of an A (ELOA, ELOA2 or ELOA3P), ELOB and ELOC subunit. Part of a multisubunit ubiquitin ligase complex consisting of elongin BC complex (ELOB and ELOC), elongin A/ELOA, RBX1 and CUL5. Interacts with ERCC6; the interaction is induced by DNA damaging agents or inhibitors of RNA polymerase II elongation. Interacts (via BC-box) with CUL5.

The protein localises to the nucleus. SIII, also known as elongin, is a general transcription elongation factor that increases the RNA polymerase II transcription elongation past template-encoded arresting sites. Subunit A is transcriptionally active and its transcription activity is strongly enhanced by binding to the dimeric complex of the SIII regulatory subunits B and C (elongin BC complex). Functionally, as part of a multisubunit complex composed of elongin BC complex (ELOB and ELOC), elongin A/ELOA, RBX1 and CUL5; polyubiquitinates monoubiquitinated POLR2A. This chain is Elongin-A (Eloa), found in Rattus norvegicus (Rat).